The primary structure comprises 205 residues: Outer-membrane lipoprotein LolB (205 aa).

Residues 1-17 form the signal peptide; sequence MRLRLFLAASALALLSG. Cys18 is lipidated: N-palmitoyl cysteine. Cys18 carries the S-diacylglycerol cysteine lipid modification.

It belongs to the LolB family. Monomer.

It localises to the cell outer membrane. Plays a critical role in the incorporation of lipoproteins in the outer membrane after they are released by the LolA protein. In Pseudomonas aeruginosa (strain LESB58), this protein is Outer-membrane lipoprotein LolB.